A 199-amino-acid chain; its full sequence is Fe/S biogenesis protein NfuA (199 aa).

[4Fe-4S] cluster-binding residues include Cys156 and Cys159.

The protein belongs to the NfuA family. Homodimer. [4Fe-4S] cluster serves as cofactor.

Its function is as follows. Involved in iron-sulfur cluster biogenesis. Binds a 4Fe-4S cluster, can transfer this cluster to apoproteins, and thereby intervenes in the maturation of Fe/S proteins. Could also act as a scaffold/chaperone for damaged Fe/S proteins. The polypeptide is Fe/S biogenesis protein NfuA (Haemophilus ducreyi (strain 35000HP / ATCC 700724)).